The following is a 581-amino-acid chain: MRHCDSFCELIPMKGCEAMLEWMIDQGAGREPADIVLKGGRFLDLITGELVESDIAICEDRIVGTFGTYRGKHEIDVSGRIVVPGFIDTHLHIASSQVTPHEFDRCVLPQGVTTAICDPHEIANVLGAEGIRFFLDSALETVMDIRVQLSSCVPATHMETSGAELLIDDLLPFADHPKVIGLAEFMNFPGVLAKDPECMAKLRAFQGRHIDGHAPLLRGLDLNGYIAAGIRTEHEATNAEEALEKLRKGMYVLVREGSVSKDLKALMPIITERHAQFLALCTDDRNPLDIADQGHLDYLIRTAIAGGVEPLAIYRAASVSAARVFGLFDRGLVAPGQRADLVVVDSLEGCHAEIVLSAGRVVSEALFAARKPVAEVGRNSVKAPRVTASNFRSQSNSGKTRAIGIVPGKIITQNLEFDLKVGPNGVEPDLERDVVKVAVIERHGKNGNIATGFVHGFGLKAGAIASTVSHDSHNICVVGASDEDIATAANRLGEIEGGFVVVRDGKVLAEMPLPIAGLMSTEPYETVREALRKLRHAAEDLGSVLEEPFLQLAFIALPVIPHLKITDRGLVDVDKFEFVGN.

The protein belongs to the metallo-dependent hydrolases superfamily. Adenine deaminase family. It depends on Mn(2+) as a cofactor.

The enzyme catalyses adenine + H2O + H(+) = hypoxanthine + NH4(+). This is Adenine deaminase from Brucella abortus (strain 2308).